The sequence spans 302 residues: Protoheme IX farnesyltransferase 2 (302 aa).

9 helical membrane-spanning segments follow: residues 14-34, 36-56, 85-105, 108-128, 133-153, 163-183, 209-229, 230-250, and 264-284; these read IIFG…QGSV, WWLL…GCAI, AALA…WFCT, LATG…SLYM, VYGT…GYCA, AILL…IAIF, IVLY…GGYA, GYGY…MALS, and QVFF…AVDG.

Belongs to the UbiA prenyltransferase family. Protoheme IX farnesyltransferase subfamily.

The protein localises to the cell inner membrane. It catalyses the reaction heme b + (2E,6E)-farnesyl diphosphate + H2O = Fe(II)-heme o + diphosphate. Its pathway is porphyrin-containing compound metabolism; heme O biosynthesis; heme O from protoheme: step 1/1. Functionally, converts heme B (protoheme IX) to heme O by substitution of the vinyl group on carbon 2 of heme B porphyrin ring with a hydroxyethyl farnesyl side group. In Chromobacterium violaceum (strain ATCC 12472 / DSM 30191 / JCM 1249 / CCUG 213 / NBRC 12614 / NCIMB 9131 / NCTC 9757 / MK), this protein is Protoheme IX farnesyltransferase 2.